Reading from the N-terminus, the 277-residue chain is Methylglyoxal reductase DkgA (277 aa).

The active-site Proton donor is Y51. H107 lines the substrate pocket. 187 to 241 (SPLAQGGKGVFDQEIIRKLAQQYNKTPAQIVIRWHLDSGLIVIPKSVTPARIREN) lines the NADP(+) pocket.

The protein belongs to the aldo/keto reductase family. As to quaternary structure, monomer.

Its subcellular location is the cytoplasm. It catalyses the reaction hydroxyacetone + NADP(+) = methylglyoxal + NADPH + H(+). Functionally, aldo-keto reductase that significantly contributes to cellular methylglyoxal detoxification by catalyzing the NADPH-dependent conversion of methylglyoxal to acetol. The chain is Methylglyoxal reductase DkgA from Yersinia pestis.